The chain runs to 303 residues: UDP-3-O-acyl-N-acetylglucosamine deacetylase (303 aa).

Positions 78, 237, and 241 each coordinate Zn(2+). His264 functions as the Proton donor in the catalytic mechanism.

The protein belongs to the LpxC family. It depends on Zn(2+) as a cofactor.

The catalysed reaction is a UDP-3-O-[(3R)-3-hydroxyacyl]-N-acetyl-alpha-D-glucosamine + H2O = a UDP-3-O-[(3R)-3-hydroxyacyl]-alpha-D-glucosamine + acetate. Its pathway is glycolipid biosynthesis; lipid IV(A) biosynthesis; lipid IV(A) from (3R)-3-hydroxytetradecanoyl-[acyl-carrier-protein] and UDP-N-acetyl-alpha-D-glucosamine: step 2/6. Catalyzes the hydrolysis of UDP-3-O-myristoyl-N-acetylglucosamine to form UDP-3-O-myristoylglucosamine and acetate, the committed step in lipid A biosynthesis. In Pseudomonas aeruginosa (strain LESB58), this protein is UDP-3-O-acyl-N-acetylglucosamine deacetylase.